A 157-amino-acid chain; its full sequence is Lipoprotein signal peptidase (157 aa).

Helical transmembrane passes span 10-30, 36-56, 58-78, and 84-104; these read LVFI…KHAI, YESL…FSLL, FLEG…FIFL, and LFKN…SNVL. Catalysis depends on residues aspartate 114 and aspartate 131. The helical transmembrane segment at 122-142 threads the bilayer; sequence FDFAIFNFADVMIDVGVGVLL.

Belongs to the peptidase A8 family.

Its subcellular location is the cell inner membrane. The enzyme catalyses Release of signal peptides from bacterial membrane prolipoproteins. Hydrolyzes -Xaa-Yaa-Zaa-|-(S,diacylglyceryl)Cys-, in which Xaa is hydrophobic (preferably Leu), and Yaa (Ala or Ser) and Zaa (Gly or Ala) have small, neutral side chains.. It functions in the pathway protein modification; lipoprotein biosynthesis (signal peptide cleavage). Functionally, this protein specifically catalyzes the removal of signal peptides from prolipoproteins. The protein is Lipoprotein signal peptidase of Helicobacter pylori (strain P12).